The sequence spans 61 residues: Bowman-Birk type proteinase inhibitor B5 (61 aa).

6 disulfides stabilise this stretch: C5-C60, C6-C22, C9-C56, C12-C20, C29-C36, and C33-C48.

This sequence belongs to the Bowman-Birk serine protease inhibitor family. In terms of tissue distribution, expressed in bulb (at protein level).

Its function is as follows. Serine protease inhibitor. Inhibits trypsin (Ki = 41 nM) and weakly inhibits chymotrypsin (Ki = 410 nM). Does not inhibit bacterial subtilisin. The protein is Bowman-Birk type proteinase inhibitor B5 of Hyacinthus orientalis (Common hyacinth).